Here is a 342-residue protein sequence, read N- to C-terminus: Ferrochelatase (342 aa).

H188 and E268 together coordinate Fe cation.

It belongs to the ferrochelatase family.

Its subcellular location is the cytoplasm. It catalyses the reaction heme b + 2 H(+) = protoporphyrin IX + Fe(2+). Its pathway is porphyrin-containing compound metabolism; protoheme biosynthesis; protoheme from protoporphyrin-IX: step 1/1. Functionally, catalyzes the ferrous insertion into protoporphyrin IX. The chain is Ferrochelatase from Rickettsia typhi (strain ATCC VR-144 / Wilmington).